The sequence spans 172 residues: Diphosphoinositol polyphosphate phosphohydrolase 1 (172 aa).

M1 carries the post-translational modification N-acetylmethionine. Substrate is bound by residues R10, 18-20 (KKR), and 39-41 (SSR). Positions 17–144 (YKKRAACLCF…VQASYFETLR (128 aa)) constitute a Nudix hydrolase domain. Mg(2+) is bound by residues G50 and E66. The short motif at 51–72 (GGMEPEEEPGTAAVREVCEEAG) is the Nudix box element. The active-site Proton acceptor is the E69. E70 provides a ligand contact to Mg(2+). Substrate is bound by residues 89–91 (RKH), R115, and K133.

This sequence belongs to the Nudix hydrolase family. DIPP subfamily. Monomer. It depends on Mg(2+) as a cofactor. Requires Mn(2+) as cofactor. Zn(2+) serves as cofactor.

The protein resides in the cytoplasm. The protein localises to the nucleus. The enzyme catalyses diphospho-myo-inositol polyphosphate + H2O = myo-inositol polyphosphate + phosphate.. It carries out the reaction 5-diphospho-1D-myo-inositol 1,2,3,4,6-pentakisphosphate + H2O = 1D-myo-inositol hexakisphosphate + phosphate + H(+). It catalyses the reaction 3,5-bis(diphospho)-1D-myo-inositol 1,2,4,6-tetrakisphosphate + H2O = 3-diphospho-1D-myo-inositol 1,2,4,5,6-pentakisphosphate + phosphate + 2 H(+). The catalysed reaction is [phosphate](n+1) + n H2O = (n+1) phosphate + n H(+). The enzyme catalyses P(1),P(5)-bis(5'-adenosyl) pentaphosphate + H2O = ADP + ATP + 2 H(+). It carries out the reaction P(1),P(6)-bis(5'-adenosyl) hexaphosphate + H2O = 2 ATP + 2 H(+). It catalyses the reaction P(1),P(4)-bis(5'-adenosyl) tetraphosphate + H2O = AMP + ATP + 2 H(+). The catalysed reaction is a 5'-end (N(7)-methyl 5'-triphosphoguanosine)-ribonucleoside in mRNA + H2O = N(7)-methyl-GMP + a 5'-end diphospho-ribonucleoside in mRNA + 2 H(+). The enzyme catalyses a 5'-end (N(7)-methyl 5'-triphosphoguanosine)-ribonucleoside in mRNA + H2O = N(7)-methyl-GDP + a 5'-end phospho-ribonucleoside in mRNA + 2 H(+). Functionally, cleaves a beta-phosphate from the diphosphate groups in PP-InsP5 (diphosphoinositol pentakisphosphate) and [PP]2-InsP4 (bisdiphosphoinositol tetrakisphosphate), suggesting that it may play a role in signal transduction. InsP6 (inositol hexakisphosphate) is not a substrate. Also able to catalyze the hydrolysis of dinucleoside oligophosphates, with diadenosine 5',5'''-P1,P6-hexaphosphate (Ap6A) and diadenosine 5',5'''- P1,P5-pentaphosphate (Ap5A) being the preferred substrates. The major reaction products are ADP and p4a from Ap6A and ADP and ATP from Ap5A. Also able to hydrolyze 5- phosphoribose 1-diphosphate. Acts as a decapping enzyme that can hydrolyze both monomethylated and unmethylated capped RNAs. Hydrolyzes monomethylated capped RNA after both the alpha- and beta-phosphates generating m7GMP + ppRNA and m7GDP + pRNA. Modulates the stability of a subset of mRNAs implicated in cell motility. Divalent cations zinc, magnesium and manganese determine its substrate specificity. Exhibits diphosphoinositol polyphosphate phosphohydrolase in the presence of magnesium ions, diadenosine hexaphosphate hydrolase activity in the presence of manganese ions and endopolyphosphatase activity in the presence of zinc ions. Plays an important role in limiting DNA damage and maintaining cell survival upon oxidative stress via its endopolyphosphatase activity. The protein is Diphosphoinositol polyphosphate phosphohydrolase 1 of Bos taurus (Bovine).